A 760-amino-acid chain; its full sequence is MAIKNHILGFPRIGLNRELKFALEKYWSKKNTLEELLLIGKNIRKENWKNQIDSGMDYVTVGDFAWYDHVLNISMMINNIPERHNPNNHILNIDTLFKVARGSKGVDNNICSASEMTKWFNTNYHYIVPEFTSNQKFYFAWKQILEETDEALSLGYKVKPVLLGPLTYLWLGKVKNSKINKLDLLKKILPIYIQVFKELSSRNINWIQIDEPILVLDIPKNWKKEFQSTYKFLDGKIKILLATYFGDITHNLDIINKLSIQGLHIDLVSSKYDLLKLSKSINNNFLLSLGIINGRNIWKTNLLEWFYKLKDFMKINNNFWISSSCSLLHVPLDITIEENLTDFVKSWFSFGIQKCLEISLLSQVLQNNLDIKELKNWIKPIHEYKSSNIVNNTSVQKRTLKISSEQFIRKNEFSVRSKIQKETLCLPVLPTTTIGSFPQTSEIRKLRLDYKNKKINQLDYEKQIKIHIKKNIIQQEQLGLDVLVHGEPERNDMVEYFSEYLEGFVFTTYGWVQSYGSRCVKPPIIVGDISRITPMTVMWSKYAQSLTKKPVKAMLTGPVTILCWSFPREDISKEDICNQIAISLRDEVLDLENSGINIIQIDEPALREGLPLRTHEWNNYLRWAVKSFKICSSGVKNSTQIHTHMCYCEFNDIMPAIVDLDADVITIETSRSDMELLEFFKTFKYPNAIGPGVYDIHSPNIPSVQSIEKLLKKALKYISIQQLWVNPDCGLKTRNWTETSLALQNMLQATLNIRKEYFKK.

5-methyltetrahydropteroyltri-L-glutamate contacts are provided by residues 17 to 20 and K118; that span reads RELK. L-homocysteine is bound by residues 434–436 and E487; that span reads IGS. L-methionine-binding positions include 434-436 and E487; that span reads IGS. 5-methyltetrahydropteroyltri-L-glutamate-binding positions include 518 to 519 and W564; that span reads RC. Position 602 (D602) interacts with L-homocysteine. D602 is an L-methionine binding site. E608 provides a ligand contact to 5-methyltetrahydropteroyltri-L-glutamate. 3 residues coordinate Zn(2+): H644, C646, and E668. The active-site Proton donor is H697. Residue C729 participates in Zn(2+) binding.

Belongs to the vitamin-B12 independent methionine synthase family. Requires Zn(2+) as cofactor.

The enzyme catalyses 5-methyltetrahydropteroyltri-L-glutamate + L-homocysteine = tetrahydropteroyltri-L-glutamate + L-methionine. It functions in the pathway amino-acid biosynthesis; L-methionine biosynthesis via de novo pathway; L-methionine from L-homocysteine (MetE route): step 1/1. Functionally, catalyzes the transfer of a methyl group from 5-methyltetrahydrofolate to homocysteine resulting in methionine formation. The chain is 5-methyltetrahydropteroyltriglutamate--homocysteine methyltransferase from Buchnera aphidicola subsp. Cinara cedri (strain Cc).